The primary structure comprises 209 residues: Ephrin-A2 (209 aa).

The first 20 residues, 1–20 (MAPAQRPLLPLLLLLLPLRA), serve as a signal peptide directing secretion. Residues 30–170 (ADRYAVYWNR…RLKVYVRPTN (141 aa)) enclose the Ephrin RBD domain. The N-linked (GlcNAc...) asparagine glycan is linked to Asn-38. 2 cysteine pairs are disulfide-bonded: Cys-69–Cys-110 and Cys-98–Cys-159. Residues Asn-170 and Asn-184 are each glycosylated (N-linked (GlcNAc...) asparagine). Asn-184 is lipidated: GPI-anchor amidated asparagine. Residues 185–209 (SSCSGLGGCHLFLTTVPVLWSLLGS) constitute a propeptide, removed in mature form.

The protein belongs to the ephrin family. In terms of assembly, binds to the receptor tyrosine kinases EPHA3, EPHA4 and EPHA5. Interacts with EPHA8; activates EPHA8. As to expression, expressed in myogenic progenitor cells.

Its subcellular location is the cell membrane. Its function is as follows. Cell surface GPI-bound ligand for Eph receptors, a family of receptor tyrosine kinases which are crucial for migration, repulsion and adhesion during neuronal, vascular and epithelial development. Binds promiscuously Eph receptors residing on adjacent cells, leading to contact-dependent bidirectional signaling into neighboring cells. The signaling pathway downstream of the receptor is referred to as forward signaling while the signaling pathway downstream of the ephrin ligand is referred to as reverse signaling. With the EPHA2 receptor may play a role in bone remodeling through regulation of osteoclastogenesis and osteoblastogenesis. The sequence is that of Ephrin-A2 (Efna2) from Mus musculus (Mouse).